A 79-amino-acid chain; its full sequence is Defensin 2 (79 aa).

The N-terminal stretch at 1–32 is a signal peptide; the sequence is VQKRTIIMEKKMAGFCIFFLILFLAQEYGVEG. 3 disulfides stabilise this stretch: C35-C79, C46-C67, and C52-C73.

This sequence belongs to the DEFL family. May form dimers. Post-translationally, not glycosylated. Has 4 disulfide bonds.

Probably has antifungal activity. The polypeptide is Defensin 2 (Arachis hypogaea (Peanut)).